Here is a 408-residue protein sequence, read N- to C-terminus: Tryptophan synthase beta chain (408 aa).

Residue K97 is modified to N6-(pyridoxal phosphate)lysine.

It belongs to the TrpB family. As to quaternary structure, tetramer of two alpha and two beta chains. Pyridoxal 5'-phosphate serves as cofactor.

It carries out the reaction (1S,2R)-1-C-(indol-3-yl)glycerol 3-phosphate + L-serine = D-glyceraldehyde 3-phosphate + L-tryptophan + H2O. It functions in the pathway amino-acid biosynthesis; L-tryptophan biosynthesis; L-tryptophan from chorismate: step 5/5. The beta subunit is responsible for the synthesis of L-tryptophan from indole and L-serine. This Pseudomonas syringae pv. syringae protein is Tryptophan synthase beta chain (trpB).